Consider the following 257-residue polypeptide: MDRIIEKLDHGWWVVSHEQKLWLPKGELPYGEAANFDLVGQRALQIGEWQGEPVWLIQQQRRHDMGSVRQVIDLDVGLFQLAGRGVQLAEFYRSHKYCGYCGHEMYPSKTEWAMLCSHCRERYYPQIAPCIIVAIRRDDSILLAQHTRHRNGVHTVLAGFVEVGETLEQAVAREVMEESGIKVKNLRYVTSQPWPFPQSLMTAFMAEYDSGDIVIDPKELLEANWYRYDDLPLLPPPGTVARRLIEDTVAMCRAEYE.

Residues Lys25 and Arg69 each contribute to the substrate site. Zn(2+) is bound by residues Cys98 and Cys101. Position 111 (Glu111) interacts with substrate. Cys116 and Cys119 together coordinate Zn(2+). Residue Tyr124 coordinates substrate. Residues 125 to 248 form the Nudix hydrolase domain; it reads PQIAPCIIVA…TVARRLIEDT (124 aa). A divalent metal cation is bound by residues Ala158, Glu174, and Glu178. Positions 159 to 180 match the Nudix box motif; it reads GFVEVGETLEQAVAREVMEESG. 192 to 199 provides a ligand contact to substrate; the sequence is QPWPFPQS. Glu219 is an a divalent metal cation binding site. Ala241 lines the substrate pocket.

The protein belongs to the Nudix hydrolase family. NudC subfamily. As to quaternary structure, homodimer. Mg(2+) is required as a cofactor. Requires Mn(2+) as cofactor. It depends on Zn(2+) as a cofactor.

The catalysed reaction is a 5'-end NAD(+)-phospho-ribonucleoside in mRNA + H2O = a 5'-end phospho-adenosine-phospho-ribonucleoside in mRNA + beta-nicotinamide D-ribonucleotide + 2 H(+). It carries out the reaction NAD(+) + H2O = beta-nicotinamide D-ribonucleotide + AMP + 2 H(+). It catalyses the reaction NADH + H2O = reduced beta-nicotinamide D-ribonucleotide + AMP + 2 H(+). In terms of biological role, mRNA decapping enzyme that specifically removes the nicotinamide adenine dinucleotide (NAD) cap from a subset of mRNAs by hydrolyzing the diphosphate linkage to produce nicotinamide mononucleotide (NMN) and 5' monophosphate mRNA. The NAD-cap is present at the 5'-end of some mRNAs and stabilizes RNA against 5'-processing. Has preference for mRNAs with a 5'-end purine. Catalyzes the hydrolysis of a broad range of dinucleotide pyrophosphates. This is NAD-capped RNA hydrolase NudC from Shigella flexneri serotype 5b (strain 8401).